A 294-amino-acid polypeptide reads, in one-letter code: Elongation factor Ts (294 aa).

Positions 79 to 82 are involved in Mg(2+) ion dislocation from EF-Tu; it reads TDFV.

This sequence belongs to the EF-Ts family.

It is found in the cytoplasm. In terms of biological role, associates with the EF-Tu.GDP complex and induces the exchange of GDP to GTP. It remains bound to the aminoacyl-tRNA.EF-Tu.GTP complex up to the GTP hydrolysis stage on the ribosome. The sequence is that of Elongation factor Ts from Geobacillus thermodenitrificans (strain NG80-2).